A 1209-amino-acid polypeptide reads, in one-letter code: Phospholipid-transporting ATPase ID (1209 aa).

Positions 1-12 are enriched in basic and acidic residues; sequence MTVPKEMPEKWA. Residues 1 to 36 are disordered; sequence MTVPKEMPEKWARAQAPPSWSRKKPSWGTEEERRAR. Topologically, residues 1–64 are cytoplasmic; that stretch reads MTVPKEMPEK…TSKYNILTFL (64 aa). Residues 65 to 86 traverse the membrane as a helical segment; it reads PVNLFEQFQEVANTYFLFLLIL. At 87-92 the chain is on the exoplasmic loop side; the sequence is QLIPQI. Residues 93-112 form a helical membrane-spanning segment; that stretch reads SSLSWFTTIVPLVLVLTITA. The Cytoplasmic segment spans residues 113–295; sequence VKDATDDYFR…TSIDRLMNTL (183 aa). A helical transmembrane segment spans residues 296-317; sequence VLWIFGFLVCMGVILAIGNAIW. The Exoplasmic loop portion of the chain corresponds to 318 to 346; it reads EHEVGMRFQVYLPWDEAVDSAFFSGFLSF. The chain crosses the membrane as a helical span at residues 347-368; it reads WSYIIILNTVVPISLYVSVEVI. The Cytoplasmic segment spans residues 369–889; that stretch reads RLGHSYFINW…GRWSYLRMCK (521 aa). D411 (4-aspartylphosphate intermediate) is an active-site residue. Positions 411, 412, 413, 515, 556, 579, 613, 693, 694, 695, 807, and 813 each coordinate ATP. D411 contributes to the Mg(2+) binding site. Mg(2+) is bound at residue T413. D833 contributes to the Mg(2+) binding site. 2 residues coordinate ATP: N836 and D837. D837 is a Mg(2+) binding site. A helical transmembrane segment spans residues 890-910; the sequence is FLCYFFYKNFAFTMVHFWFGF. Residues 911-922 lie on the Exoplasmic loop side of the membrane; it reads FCGFSAQTVYDQ. Residues 923–942 form a helical membrane-spanning segment; sequence YFITLYNIVYTSLPVLAMGV. Over 943–972 the chain is Cytoplasmic; the sequence is FDQDVPEQRSMEYPKLYEPGQLNLLFNKRE. The helical transmembrane segment at 973–994 threads the bilayer; sequence FFICIAQGIYTSVLMFFIPYGV. The Exoplasmic loop segment spans residues 995-1008; it reads FADATRDDGTQLAD. The chain crosses the membrane as a helical span at residues 1009 to 1031; sequence YQSFAVTVATSLVIVVSVQIGLD. Topologically, residues 1032–1037 are cytoplasmic; that stretch reads TGYWTA. A helical membrane pass occupies residues 1038–1058; sequence INHFFIWGSLAVYFAILFAMH. Topologically, residues 1059-1078 are exoplasmic loop; sequence SNGLFDMFPNQFRFVGNAQN. A helical membrane pass occupies residues 1079-1103; the sequence is TLAQPTVWLTIVLTTVVCIMPVVAF. Residues 1104-1209 are Cytoplasmic-facing; sequence RFLRLNLKPD…SGGADKPLKG (106 aa). Position 1175 is a phosphoserine (S1175). A disordered region spans residues 1181 to 1209; it reads SSSWIESLRRKKSDSASSPSGGADKPLKG. Residues 1195-1209 show a composition bias toward low complexity; sequence SASSPSGGADKPLKG.

It belongs to the cation transport ATPase (P-type) (TC 3.A.3) family. Type IV subfamily. As to quaternary structure, component of a P4-ATPase flippase complex which consists of a catalytic alpha subunit ATP8B2 and an accessory beta subunit TMEM30A or TMEM30B. Mg(2+) serves as cofactor. In terms of tissue distribution, isoform 3 is ubiquitous, with highest expression in aorta, cerebellum and uterus.

The protein localises to the cell membrane. It is found in the endoplasmic reticulum membrane. The catalysed reaction is ATP + H2O + phospholipidSide 1 = ADP + phosphate + phospholipidSide 2.. The enzyme catalyses a 1,2-diacyl-sn-glycero-3-phosphocholine(out) + ATP + H2O = a 1,2-diacyl-sn-glycero-3-phosphocholine(in) + ADP + phosphate + H(+). Functionally, catalytic component of P4-ATPase flippase complex, which catalyzes the hydrolysis of ATP coupled to the transport of phosphatidylcholine (PC) from the outer to the inner leaflet of the plasma membrane. May contribute to the maintenance of membrane lipid asymmetry. This chain is Phospholipid-transporting ATPase ID, found in Homo sapiens (Human).